Reading from the N-terminus, the 253-residue chain is Phosphoglycerate mutase 2 (253 aa).

Thr-3 carries the post-translational modification Phosphothreonine. Substrate is bound by residues 10-17, 23-24, Arg-62, 89-92, Lys-100, and 116-117; these read RHGESSWN, CG, ERHY, and RR. The active-site Tele-phosphohistidine intermediate is the His-11. A phosphoserine mark is found at Ser-14 and Ser-15. The active-site Proton donor/acceptor is the Glu-89. Ser-118 carries the phosphoserine modification. Position 121 is a phosphothreonine (Thr-121). Tyr-132 and Tyr-133 each carry phosphotyrosine. Residue Ser-135 is modified to Phosphoserine. Residue Thr-152 is modified to Phosphothreonine. Substrate is bound at residue 187 to 188; sequence GN.

The protein belongs to the phosphoglycerate mutase family. BPG-dependent PGAM subfamily. In terms of assembly, homodimer. Interacts with ENO1.

It catalyses the reaction (2R)-2-phosphoglycerate = (2R)-3-phosphoglycerate. It carries out the reaction (2R)-3-phospho-glyceroyl phosphate = (2R)-2,3-bisphosphoglycerate + H(+). Functionally, interconversion of 3- and 2-phosphoglycerate with 2,3-bisphosphoglycerate as the primer of the reaction. Can also catalyze the reaction of EC 5.4.2.4 (synthase), but with a reduced activity. This is Phosphoglycerate mutase 2 (Pgam2) from Rattus norvegicus (Rat).